A 286-amino-acid chain; its full sequence is CDP-diacylglycerol--serine O-phosphatidyltransferase (286 aa).

The next 5 helical transmembrane spans lie at 15–35 (ILPS…IKFA), 95–115 (MLSK…CVVL), 135–155 (EFFV…LLAL), 167–187 (VWFL…GIPM), and 207–227 (LAIC…VIII).

It belongs to the CDP-alcohol phosphatidyltransferase class-I family.

It localises to the cell membrane. It carries out the reaction a CDP-1,2-diacyl-sn-glycerol + L-serine = a 1,2-diacyl-sn-glycero-3-phospho-L-serine + CMP + H(+). In Mycobacterium bovis (strain ATCC BAA-935 / AF2122/97), this protein is CDP-diacylglycerol--serine O-phosphatidyltransferase (pssA).